We begin with the raw amino-acid sequence, 702 residues long: Ribosomal RNA large subunit methyltransferase K/L (702 aa).

In terms of domain architecture, THUMP spans 43-154 (LVYQSLMWSR…KETASIALDL (112 aa)).

The protein belongs to the methyltransferase superfamily. RlmKL family.

It is found in the cytoplasm. It catalyses the reaction guanosine(2445) in 23S rRNA + S-adenosyl-L-methionine = N(2)-methylguanosine(2445) in 23S rRNA + S-adenosyl-L-homocysteine + H(+). The catalysed reaction is guanosine(2069) in 23S rRNA + S-adenosyl-L-methionine = N(2)-methylguanosine(2069) in 23S rRNA + S-adenosyl-L-homocysteine + H(+). Specifically methylates the guanine in position 2445 (m2G2445) and the guanine in position 2069 (m7G2069) of 23S rRNA. This is Ribosomal RNA large subunit methyltransferase K/L from Escherichia coli O1:K1 / APEC.